We begin with the raw amino-acid sequence, 37 residues long: Large ribosomal subunit protein bL36 (37 aa).

Belongs to the bacterial ribosomal protein bL36 family.

In Leptothrix cholodnii (strain ATCC 51168 / LMG 8142 / SP-6) (Leptothrix discophora (strain SP-6)), this protein is Large ribosomal subunit protein bL36.